A 662-amino-acid chain; its full sequence is Glycogen debranching enzyme (662 aa).

Asp-338 acts as the Nucleophile in catalysis. The Proton donor role is filled by Glu-373.

The protein belongs to the glycosyl hydrolase 13 family.

It carries out the reaction Hydrolysis of (1-&gt;6)-alpha-D-glucosidic linkages to branches with degrees of polymerization of three or four glucose residues in limit dextrin.. Its pathway is glycan degradation; glycogen degradation. Removes maltotriose and maltotetraose chains that are attached by 1,6-alpha-linkage to the limit dextrin main chain, generating a debranched limit dextrin. The chain is Glycogen debranching enzyme from Yersinia enterocolitica serotype O:8 / biotype 1B (strain NCTC 13174 / 8081).